We begin with the raw amino-acid sequence, 938 residues long: Breast cancer type 2 susceptibility protein homolog (938 aa).

Basic and acidic residues-rich tracts occupy residues 320–339 (LEPS…ESKI) and 409–425 (NSIK…ETPN). 2 disordered regions span residues 320 to 359 (LEPS…TTVL) and 409 to 434 (NSIK…SSHQ). BRCA2 repeat units lie at residues 537 to 571 (AEPE…EFQY), 638 to 672 (NEPQ…QSRA), and 713 to 747 (SETE…EFQA). Polar residues predominate over residues 870 to 879 (SSTETSTSCA). The interval 870-938 (SSTETSTSCA…RRLGLSRSRY (69 aa)) is disordered. Positions 898 to 915 (ADRDLNRSKDCAKNRQDA) are enriched in basic and acidic residues. The span at 926 to 938 (KKSRRLGLSRSRY) shows a compositional bias: basic residues.

In terms of assembly, interacts with Rad9 and spn-A/Rad51.

It is found in the nucleus. Functionally, involved in and required for double-strand break repair by meiotic and mitotic homologous recombination. During meiosis, has a dual role in the repair of meiotic double-stranded breaks and the efficient activation of the meiotic recombination checkpoint. This is Breast cancer type 2 susceptibility protein homolog from Drosophila sechellia (Fruit fly).